The following is a 359-amino-acid chain: Alanine racemase (359 aa).

Residue Lys-34 is the Proton acceptor; specific for D-alanine of the active site. Residue Lys-34 is modified to N6-(pyridoxal phosphate)lysine. Arg-129 contacts substrate. Tyr-256 serves as the catalytic Proton acceptor; specific for L-alanine. Met-304 contributes to the substrate binding site.

This sequence belongs to the alanine racemase family. Requires pyridoxal 5'-phosphate as cofactor.

It catalyses the reaction L-alanine = D-alanine. It functions in the pathway amino-acid biosynthesis; D-alanine biosynthesis; D-alanine from L-alanine: step 1/1. In terms of biological role, catalyzes the interconversion of L-alanine and D-alanine. May also act on other amino acids. The chain is Alanine racemase (alr) from Photobacterium profundum (strain SS9).